The following is a 247-amino-acid chain: tRNA pseudouridine synthase A (247 aa).

Aspartate 58 serves as the catalytic Nucleophile. Tyrosine 116 serves as a coordination point for substrate.

This sequence belongs to the tRNA pseudouridine synthase TruA family. As to quaternary structure, homodimer.

It carries out the reaction uridine(38/39/40) in tRNA = pseudouridine(38/39/40) in tRNA. Functionally, formation of pseudouridine at positions 38, 39 and 40 in the anticodon stem and loop of transfer RNAs. The protein is tRNA pseudouridine synthase A of Hydrogenobaculum sp. (strain Y04AAS1).